The following is a 61-amino-acid chain: Small ribosomal subunit protein uS14 (61 aa).

The Zn(2+) site is built by C24, C27, C40, and C43.

This sequence belongs to the universal ribosomal protein uS14 family. Zinc-binding uS14 subfamily. Part of the 30S ribosomal subunit. Contacts proteins S3 and S10. Zn(2+) is required as a cofactor.

Its function is as follows. Binds 16S rRNA, required for the assembly of 30S particles and may also be responsible for determining the conformation of the 16S rRNA at the A site. This is Small ribosomal subunit protein uS14 from Nitratidesulfovibrio vulgaris (strain ATCC 29579 / DSM 644 / CCUG 34227 / NCIMB 8303 / VKM B-1760 / Hildenborough) (Desulfovibrio vulgaris).